The sequence spans 184 residues: Photosystem I assembly protein Ycf4 (184 aa).

The next 2 helical transmembrane spans lie at 22 to 42 (FFWA…GTSS) and 57 to 77 (IIFF…LFIS).

It belongs to the Ycf4 family.

The protein localises to the plastid. The protein resides in the chloroplast thylakoid membrane. In terms of biological role, seems to be required for the assembly of the photosystem I complex. The chain is Photosystem I assembly protein Ycf4 from Aethionema grandiflorum (Persian stone-cress).